The following is a 561-amino-acid chain: 7-keto 8-aminopelargonic acid transporter (561 aa).

The Cytoplasmic portion of the chain corresponds to 1 to 49 (MNRVGAVFLFVYERNFFLSIVPDRHRTEIRMSSSERSEVKFDKHFNWWS). A helical transmembrane segment spans residues 50–70 (LLGIAFSLSCSWVGISASMAV). Over 71–77 (GIASGGP) the chain is Extracellular. The chain crosses the membrane as a helical span at residues 78 to 98 (LLIIYGLIIAAFFSLMCGISL). Residues 99-160 (GDFAAILPNS…NVEVSSKFQK (62 aa)) are Cytoplasmic-facing. Residues 161-181 (VSSMVVGLLNYFGAIFTTASI) form a helical membrane-spanning segment. Residues 182 to 204 (CSSLSMSCIGIHKLLHPDYELKH) lie on the Extracellular side of the membrane. A helical transmembrane segment spans residues 205–225 (WHVFVGYECINAVLTLFNIYS). The Cytoplasmic segment spans residues 226-230 (TPLPY). A helical transmembrane segment spans residues 231–251 (ISQFGLYTSLLSFAMTFIICI). The Extracellular segment spans residues 252–281 (VSRSDNTVDPWPKASNIFGSFDNQTGWNSS). Residues 282–302 (GMAFVVGLVNPIWAFVGIDSA) traverse the membrane as a helical segment. Residues 303 to 321 (THMIDEVGYSKSRFLVPKV) lie on the Cytoplasmic side of the membrane. Residues 322-342 (IITTIIVGFVTSFIYCVGLFF) form a helical membrane-spanning segment. At 343 to 369 (CITDQTAVVESILPIVEIFYQATGNRN) the chain is on the extracellular side. Residues 370–390 (LSVFLQCMCITTGFVSGIASG) traverse the membrane as a helical segment. The Cytoplasmic portion of the chain corresponds to 391-439 (TWQSRILQSFGKSYAPFYKEGSLGNKSLKKLAVLTPGFKSPLYAHFLSQ). The helical transmembrane segment at 440–460 (ICVTIIGCIFMGSSTAFNAII) threads the bilayer. A topological domain (extracellular) is located at residue T461. The helical transmembrane segment at 462 to 482 (ACITLLLMSYAVPSFIFLFVI) threads the bilayer. The Cytoplasmic segment spans residues 483 to 507 (KKEKFIHRIESDVNCVSRPNRRRMS). A helical membrane pass occupies residues 508–528 (MIPHIICILWTLFCLVFLSFP). The Extracellular segment spans residues 529–540 (YTLPVTAGNMNY). Residues 541 to 560 (TSVVYAVVFCIISIVVFPTC) traverse the membrane as a helical segment. Position 561 (I561) is a topological domain, cytoplasmic.

The protein belongs to the amino acid-polyamine-organocation (APC) superfamily.

The protein localises to the membrane. Its function is as follows. Transport into the cell of 7-keto 8-aminopelargonic acid. The sequence is that of 7-keto 8-aminopelargonic acid transporter (BIO5) from Saccharomyces cerevisiae (strain ATCC 204508 / S288c) (Baker's yeast).